We begin with the raw amino-acid sequence, 134 residues long: ATP synthase epsilon chain (134 aa).

It belongs to the ATPase epsilon chain family. In terms of assembly, F-type ATPases have 2 components, CF(1) - the catalytic core - and CF(0) - the membrane proton channel. CF(1) has five subunits: alpha(3), beta(3), gamma(1), delta(1), epsilon(1). CF(0) has three main subunits: a, b and c.

It localises to the cell membrane. Its function is as follows. Produces ATP from ADP in the presence of a proton gradient across the membrane. This is ATP synthase epsilon chain from Staphylococcus aureus (strain USA300).